The primary structure comprises 247 residues: Calpain small subunit 2 (247 aa).

Residues Ala88, Asp91, Glu93, Asp131, Asp133, Thr135, Lys137, Glu142, Asp161, Asp163, Ser165, and Asp204 each coordinate Ca(2+). EF-hand domains lie at 118-151 (FSLD…NNIK), 148-183 (NNIK…AGFQ), 184-212 (LNEQ…ISCL), and 213-247 (VRLD…TMYS).

In terms of assembly, heterodimer of a large (catalytic) and a small (regulatory) subunit.

It localises to the cytoplasm. It is found in the cell membrane. Functionally, calcium-regulated non-lysosomal thiol-protease which catalyzes limited proteolysis of substrates involved in cytoskeletal remodeling and signal transduction. This small subunit may act as a tissue-specific chaperone of the large subunit, possibly by helping it fold into its correct conformation for activity. This chain is Calpain small subunit 2 (Capns2), found in Mus musculus (Mouse).